Here is a 109-residue protein sequence, read N- to C-terminus: Large ribosomal subunit protein uL24 (109 aa).

This sequence belongs to the universal ribosomal protein uL24 family. Part of the 50S ribosomal subunit.

Functionally, one of two assembly initiator proteins, it binds directly to the 5'-end of the 23S rRNA, where it nucleates assembly of the 50S subunit. One of the proteins that surrounds the polypeptide exit tunnel on the outside of the subunit. The sequence is that of Large ribosomal subunit protein uL24 from Rickettsia akari (strain Hartford).